We begin with the raw amino-acid sequence, 125 residues long: Large ribosomal subunit protein bL20 (125 aa).

The protein belongs to the bacterial ribosomal protein bL20 family.

Binds directly to 23S ribosomal RNA and is necessary for the in vitro assembly process of the 50S ribosomal subunit. It is not involved in the protein synthesizing functions of that subunit. The chain is Large ribosomal subunit protein bL20 from Thermobifida fusca (strain YX).